The chain runs to 584 residues: (+)-larreatricin hydroxylase, chloroplastic (584 aa).

A chloroplast-targeting transit peptide spans 1–32 (MASLSSQSKLLATPYSFPYHTKPSRVSLRRVS). Residues 33-79 (CKASNDNKDKPNDQEKTFSIDRRNMLIGLGGLYGASNVFPSNQSTLA) constitute a thylakoid transit peptide. 2 disulfide bridges follow: C91–C106 and C105–C168. The Cu cation site is built by H167, H188, H197, H319, H323, and H353. Positions 171–188 (CNGAYDQVGFPDVNIQVH) form a cross-link, 2'-(S-cysteinyl)-histidine (Cys-His). Positions 432-584 (RLRSKATTTT…KIEFVRDEED (153 aa)) are cleaved as a propeptide — removed in mature form.

It belongs to the tyrosinase family. Requires Cu(2+) as cofactor.

The protein resides in the plastid. The protein localises to the chloroplast thylakoid lumen. It carries out the reaction (+)-larreatricin + AH2 + O2 = (+)-3'-hydroxylarreatricin + A + H2O. Functionally, enantio-specific polyphenol oxidase involved in aromatic ring hydroxylation. Involved in the biosynthesis of the creosote bush 8-8' linked lignans. Has a strong preference for the 3' position of (+)-larreatricin. The polypeptide is (+)-larreatricin hydroxylase, chloroplastic (Larrea tridentata (Creosote bush)).